A 255-amino-acid polypeptide reads, in one-letter code: Octanoyltransferase (255 aa).

The region spanning 54–238 (GDAAELVWLL…AFTEIFGATV (185 aa)) is the BPL/LPL catalytic domain. Substrate contacts are provided by residues 92-99 (RGGQLTYH), 167-169 (AIG), and 180-182 (GIA). Catalysis depends on cysteine 198, which acts as the Acyl-thioester intermediate.

It belongs to the LipB family.

It is found in the cytoplasm. It carries out the reaction octanoyl-[ACP] + L-lysyl-[protein] = N(6)-octanoyl-L-lysyl-[protein] + holo-[ACP] + H(+). Its pathway is protein modification; protein lipoylation via endogenous pathway; protein N(6)-(lipoyl)lysine from octanoyl-[acyl-carrier-protein]: step 1/2. Catalyzes the transfer of endogenously produced octanoic acid from octanoyl-acyl-carrier-protein onto the lipoyl domains of lipoate-dependent enzymes. Lipoyl-ACP can also act as a substrate although octanoyl-ACP is likely to be the physiological substrate. This Rhodopseudomonas palustris (strain HaA2) protein is Octanoyltransferase.